Reading from the N-terminus, the 375-residue chain is tRNA-specific 2-thiouridylase MnmA (375 aa).

ATP contacts are provided by residues 16–23 (GMSGGVDS) and methionine 42. The segment at 102-104 (NPD) is interaction with target base in tRNA. Cysteine 107 acts as the Nucleophile in catalysis. Cysteine 107 and cysteine 203 are joined by a disulfide. Position 131 (glycine 131) interacts with ATP. The interval 153–155 (KDQ) is interaction with tRNA. Cysteine 203 (cysteine persulfide intermediate) is an active-site residue. An interaction with tRNA region spans residues 315–316 (RY).

This sequence belongs to the MnmA/TRMU family.

The protein resides in the cytoplasm. The catalysed reaction is S-sulfanyl-L-cysteinyl-[protein] + uridine(34) in tRNA + AH2 + ATP = 2-thiouridine(34) in tRNA + L-cysteinyl-[protein] + A + AMP + diphosphate + H(+). In terms of biological role, catalyzes the 2-thiolation of uridine at the wobble position (U34) of tRNA, leading to the formation of s(2)U34. In Pseudomonas paraeruginosa (strain DSM 24068 / PA7) (Pseudomonas aeruginosa (strain PA7)), this protein is tRNA-specific 2-thiouridylase MnmA.